A 137-amino-acid polypeptide reads, in one-letter code: Large ribosomal subunit protein uL16 (137 aa).

This sequence belongs to the universal ribosomal protein uL16 family. Part of the 50S ribosomal subunit.

Its function is as follows. Binds 23S rRNA and is also seen to make contacts with the A and possibly P site tRNAs. The polypeptide is Large ribosomal subunit protein uL16 (Ruegeria pomeroyi (strain ATCC 700808 / DSM 15171 / DSS-3) (Silicibacter pomeroyi)).